The primary structure comprises 222 residues: Adenylate kinase (222 aa).

10–15 (GAGKGT) serves as a coordination point for ATP. The interval 30–59 (STGDMLRAAVKAGTPLGIEAKKVMDAGGLV) is NMP. AMP contacts are provided by residues threonine 31, arginine 36, 57 to 59 (GLV), 85 to 88 (GFPR), and glutamine 92. The tract at residues 122–159 (GRRVHVASGRTYHVKYNPPKTEGVDDESGEPLIQRDDD) is LID. ATP contacts are provided by residues arginine 123 and 132-133 (TY). The disordered stretch occupies residues 138-160 (NPPKTEGVDDESGEPLIQRDDDK). 2 residues coordinate AMP: arginine 156 and arginine 167. Glycine 207 is an ATP binding site.

It belongs to the adenylate kinase family. In terms of assembly, monomer.

The protein localises to the cytoplasm. The enzyme catalyses AMP + ATP = 2 ADP. It participates in purine metabolism; AMP biosynthesis via salvage pathway; AMP from ADP: step 1/1. Catalyzes the reversible transfer of the terminal phosphate group between ATP and AMP. Plays an important role in cellular energy homeostasis and in adenine nucleotide metabolism. The sequence is that of Adenylate kinase from Ralstonia pickettii (strain 12J).